The chain runs to 1395 residues: Adventurous-gliding motility protein Z (1395 aa).

Residues 4-122 enclose the Response regulatory domain; sequence RVLIVESEHD…ELAALSHGIV (119 aa). The residue at position 48 (Asp-48) is a 4-aspartylphosphate. 6 disordered regions span residues 137 to 172, 874 to 893, 919 to 947, 1212 to 1249, 1287 to 1312, and 1326 to 1395; these read LNGT…AMTE, AAES…GLRS, EQHA…ARAH, AAES…AAKQ, RYKS…EDDE, and AAAA…ELDK. Residues 213–911 are a coiled coil; it reads EGKIQILRDE…LEQTHGQLAA (699 aa). Composition is skewed to basic and acidic residues over residues 919 to 928 and 1228 to 1249; these read EQHAHQESRK and QKER…AAKQ. Composition is skewed to low complexity over residues 1291–1306 and 1326–1352; these read KSAT…AKPA and AAAA…KKAP. The span at 1382–1395 shows a compositional bias: acidic residues; it reads EDDDWTALVDELDK.

In terms of assembly, interacts with MglA.

The protein resides in the cytoplasm. Required for adventurous-gliding motility (A motility), in response to environmental signals sensed by the frz chemosensory system. Forms ordered clusters that span the cell length and that remain stationary relative to the surface across which the cells move, serving as anchor points (focal, transient adhesion sites) that allow the bacterium to move forward. Clusters disassemble at the lagging cell pole. The polypeptide is Adventurous-gliding motility protein Z (aglZ) (Myxococcus xanthus (strain DK1622)).